Here is a 361-residue protein sequence, read N- to C-terminus: Caffeic acid 3-O-methyltransferase 2 (361 aa).

Methionine 128 to leucine 134 provides a ligand contact to substrate. The substrate binding stretch occupies residues alanine 160 to methionine 178. Positions 206, 229, 249, 250, and 263 each coordinate S-adenosyl-L-methionine. Histidine 267 acts as the Proton acceptor in catalysis.

Belongs to the class I-like SAM-binding methyltransferase superfamily. Cation-independent O-methyltransferase family. COMT subfamily. As to quaternary structure, homodimer.

It catalyses the reaction (E)-caffeate + S-adenosyl-L-methionine = (E)-ferulate + S-adenosyl-L-homocysteine + H(+). The protein operates within aromatic compound metabolism; phenylpropanoid biosynthesis. Functionally, catalyzes the conversion of caffeic acid to ferulic acid and of 5-hydroxyferulic acid to sinapic acid. The resulting products may subsequently be converted to the corresponding alcohols that are incorporated into lignins. The protein is Caffeic acid 3-O-methyltransferase 2 (COMT2) of Ocimum basilicum (Sweet basil).